Here is a 382-residue protein sequence, read N- to C-terminus: Probable trehalose-phosphate phosphatase 2 (382 aa).

It belongs to the trehalose phosphatase family. It depends on a divalent metal cation as a cofactor. Expressed in roots and shoots.

It catalyses the reaction alpha,alpha-trehalose 6-phosphate + H2O = alpha,alpha-trehalose + phosphate. The protein operates within glycan biosynthesis; trehalose biosynthesis. Its function is as follows. Removes the phosphate from trehalose 6-phosphate to produce free trehalose. Trehalose accumulation in plant may improve abiotic stress tolerance. This is Probable trehalose-phosphate phosphatase 2 (TPP2) from Oryza sativa subsp. japonica (Rice).